Here is a 230-residue protein sequence, read N- to C-terminus: Prepilin leader peptidase/N-methyltransferase (230 aa).

The next 7 membrane-spanning stretches (helical) occupy residues 1–21 (MIYF…WFYL), 60–80 (GHIL…QIAF), 84–104 (IFTV…YLDW), 114–134 (CLWL…LLTL), 140–160 (SAAS…FYYG), 181–201 (LETL…FSLI), and 208–228 (FLPF…VKYY).

The protein belongs to the peptidase A24 family.

It is found in the cell inner membrane. The enzyme catalyses Typically cleaves a -Gly-|-Phe- bond to release an N-terminal, basic peptide of 5-8 residues from type IV prepilin, and then N-methylates the new N-terminal amino group, the methyl donor being S-adenosyl-L-methionine.. Functionally, plays a role in type II pseudopili formation by proteolytically removing the leader sequence from substrate proteins and subsequently monomethylating the alpha-amino group of the newly exposed N-terminal phenylalanine. Substrates include proteins required for biogenesis of the type II general secretory apparatus. The chain is Prepilin leader peptidase/N-methyltransferase (hofD) from Haemophilus influenzae (strain ATCC 51907 / DSM 11121 / KW20 / Rd).